We begin with the raw amino-acid sequence, 376 residues long: Nuclear hormone receptor family member nhr-124 (376 aa).

The nuclear receptor DNA-binding region spans 11–89 (PNICAICHQK…LGMRYHNSSE (79 aa)). 2 consecutive NR C4-type zinc fingers follow at residues 14 to 34 (CAIC…CNAC) and 50 to 72 (CKKG…CRSC). One can recognise an NR LBD domain in the interval 125-371 (HLHALNETRY…FSKILTEACR (247 aa)).

Belongs to the nuclear hormone receptor family.

It localises to the nucleus. In terms of biological role, orphan nuclear receptor. The polypeptide is Nuclear hormone receptor family member nhr-124 (nhr-124) (Caenorhabditis elegans).